The following is a 211-amino-acid chain: Uridine kinase (211 aa).

12–19 contributes to the ATP binding site; the sequence is GGSGSGKT.

Belongs to the uridine kinase family.

It is found in the cytoplasm. It carries out the reaction uridine + ATP = UMP + ADP + H(+). The enzyme catalyses cytidine + ATP = CMP + ADP + H(+). The protein operates within pyrimidine metabolism; CTP biosynthesis via salvage pathway; CTP from cytidine: step 1/3. It functions in the pathway pyrimidine metabolism; UMP biosynthesis via salvage pathway; UMP from uridine: step 1/1. The polypeptide is Uridine kinase (Bacillus licheniformis (strain ATCC 14580 / DSM 13 / JCM 2505 / CCUG 7422 / NBRC 12200 / NCIMB 9375 / NCTC 10341 / NRRL NRS-1264 / Gibson 46)).